The primary structure comprises 144 residues: Maximins 4/H3 type 2 (144 aa).

Positions 1 to 18 are cleaved as a signal peptide; it reads MNFKYIIAVSFFIASAYA. Residues 19-43 constitute a propeptide that is removed on maturation; sequence RRNEKDVQSLSQRDVLEEESLREIR. Asn-70 carries the asparagine amide modification. A propeptide spanning residues 74–123 is cleaved from the precursor; the sequence is TAEDHEVMKRLEAVMRDLDSLDHPEEASERETRGFNQEEIANLFTKKEKR. The residue at position 143 (Ile-143) is an Isoleucine amide.

It belongs to the bombinin family. As to expression, expressed by the skin glands.

Its subcellular location is the secreted. In terms of biological role, maximin-4 shows antibacterial activity against both Gram-positive and Gram-negative bacteria. It also shows antimicrobial activity against the fungus C.albicans, but not against A.flavus nor P.uticale. It has little hemolytic activity. It does not possess a significant cytotoxicity against tumor cell lines. It does not possess a significant anti-HIV activity. Functionally, maximin-H3 shows antibacterial activity against both Gram-positive and Gram-negative bacteria. It also shows antimicrobial activity against the fungus C.albicans. Shows strong hemolytic activity. The protein is Maximins 4/H3 type 2 of Bombina maxima (Giant fire-bellied toad).